The chain runs to 488 residues: RuvB-like helicase 1 (488 aa).

The segment covering 1-11 (MATANTSSGSM) has biased composition (polar residues). The segment at 1-29 (MATANTSSGSMNGVGPVTMDSSTSGASRE) is disordered. Residue 87–94 (GGPGTGKT) participates in ATP binding.

It belongs to the RuvB family. As to quaternary structure, may form heterododecamers with RVB2. Component of the SWR1 chromatin remodeling complex, the INO80 chromatin remodeling complex, and of the R2TP complex.

The protein localises to the nucleus. It carries out the reaction ATP + H2O = ADP + phosphate + H(+). In terms of biological role, DNA helicase which participates in several chromatin remodeling complexes, including the SWR1 and the INO80 complexes. The SWR1 complex mediates the ATP-dependent exchange of histone H2A for the H2A variant HZT1 leading to transcriptional regulation of selected genes by chromatin remodeling. The INO80 complex remodels chromatin by shifting nucleosomes and is involved in DNA repair. Also involved in pre-rRNA processing. The sequence is that of RuvB-like helicase 1 (RVB1) from Mycosarcoma maydis (Corn smut fungus).